Here is a 381-residue protein sequence, read N- to C-terminus: F-box/LRR-repeat protein At4g14103 (381 aa).

Residues 7-60 (RDVISSLPDDISSHILSFLPTKEAASTSVLSKKWRYLFAFVPNLDLDDSVYLNP) enclose the F-box domain. LRR repeat units lie at residues 118–146 (DLHLNLESEFLLPSQVYLCKTLVWLKLRF), 171–196 (HFEEHGVGLTKLLSGCPMLEDLVLDD), 218–243 (SWQERDEFPKSVLLDTPNLVYLKFTD), 249–274 (YPKVNLDSLVEAHIDLRLLKPLLINY), 299–330 (TLYLSANTLQVLTYSCDAIPIFNNLTHLTIES), and 331–356 (NPRVGWQSVPGLLKNSPNLETLIFQG).

The sequence is that of F-box/LRR-repeat protein At4g14103 from Arabidopsis thaliana (Mouse-ear cress).